The following is a 54-amino-acid chain: UPF0391 membrane protein Pfl01_0044 (54 aa).

2 consecutive transmembrane segments (helical) span residues 4–24 (WAIT…GGIA) and 29–49 (GIAK…FFFG).

It belongs to the UPF0391 family.

The protein resides in the cell membrane. The sequence is that of UPF0391 membrane protein Pfl01_0044 from Pseudomonas fluorescens (strain Pf0-1).